A 503-amino-acid chain; its full sequence is DnaJ homolog subfamily C member 3 (503 aa).

The signal sequence occupies residues 1–31 (MVSAAASAGRLGSALPFLLVLLDLQYQGAEC). TPR repeat units lie at residues 37-70 (VEKQ…DSDN), 71-104 (YIAY…KQDF), 105-137 (TSRL…NPSN), 153-186 (LQRL…CVWD), 187-220 (AELR…KSDN), 221-254 (TEAF…DQDH), 267-300 (LNKQ…EPDV), 305-338 (TRAK…EPTN), and 339-372 (VNAL…SEND). Residues Cys-247 and Cys-257 are joined by a disulfide bond. The cysteines at positions 312 and 328 are disulfide-linked. The flexible linker stretch occupies residues 374–392 (QIREGLERAQRMLKQSQKR). The J domain occupies 393–461 (DYYKILGVKR…EMRRKFDAGE (69 aa)).

The protein localises to the endoplasmic reticulum. Functionally, may be involved in the unfolded protein response (UPR) during ER stress. This is DnaJ homolog subfamily C member 3 (DNAJC3) from Gallus gallus (Chicken).